The chain runs to 529 residues: DEP domain-containing protein 1B (529 aa).

One can recognise a DEP domain in the interval 24–108; that stretch reads FRARMPLRRH…DNRHLYRFPP (85 aa). Ser-160 is modified (phosphoserine). Positions 201 to 393 constitute a Rho-GAP domain; sequence DSLEEVLNTK…FLMDNYQEIL (193 aa). A Phosphoserine modification is found at Ser-436.

The chain is DEP domain-containing protein 1B (Depdc1b) from Mus musculus (Mouse).